The chain runs to 175 residues: Ribosome maturation factor RimM (175 aa).

The PRC barrel domain occupies 96-172 (PDTYYDHQLE…LIEIDPPDGL (77 aa)).

This sequence belongs to the RimM family. In terms of assembly, binds ribosomal protein uS19.

The protein localises to the cytoplasm. Functionally, an accessory protein needed during the final step in the assembly of 30S ribosomal subunit, possibly for assembly of the head region. Essential for efficient processing of 16S rRNA. May be needed both before and after RbfA during the maturation of 16S rRNA. It has affinity for free ribosomal 30S subunits but not for 70S ribosomes. This is Ribosome maturation factor RimM from Mycobacterium avium (strain 104).